The sequence spans 741 residues: Interleukin-17 receptor D (741 aa).

Positions 1–26 (MAPGRELGAFLLALLAFCGGRRLAEA) are cleaved as a signal peptide. The Extracellular portion of the chain corresponds to 27-301 (AGGPGGRRGA…VHSPWAGPIR (275 aa)). 5 N-linked (GlcNAc...) asparagine glycosylation sites follow: Asn57, Asn82, Asn173, Asn208, and Asn279. A helical membrane pass occupies residues 302-322 (AIAITVPLVVISAFATLFTVM). The Cytoplasmic segment spans residues 323-741 (CRKKQQENIY…TDELQAIAPL (419 aa)). The region spanning 357 to 510 (RPKVFICYSS…LMDNLPQLYS (154 aa)) is the SEFIR domain. Positions 688–703 (TETSSITGSVSSSSGL) are enriched in low complexity. Residues 688–708 (TETSSITGSVSSSSGLGEEEP) are disordered.

The protein resides in the membrane. Functionally, feedback inhibitor of fibroblast growth factor mediated Ras-MAPK signaling and ERK activation. May inhibit FGF-induced FGFR1 tyrosine phosphorylation. Inhibits TGFB-induced epithelial-to-mesenchymal transition in lens epithelial cells. This Gallus gallus (Chicken) protein is Interleukin-17 receptor D (IL17RD).